The primary structure comprises 105 residues: Large ribosomal subunit protein uL24 (105 aa).

It belongs to the universal ribosomal protein uL24 family. Part of the 50S ribosomal subunit.

Functionally, one of two assembly initiator proteins, it binds directly to the 5'-end of the 23S rRNA, where it nucleates assembly of the 50S subunit. Its function is as follows. One of the proteins that surrounds the polypeptide exit tunnel on the outside of the subunit. The protein is Large ribosomal subunit protein uL24 of Nitrosomonas europaea (strain ATCC 19718 / CIP 103999 / KCTC 2705 / NBRC 14298).